The sequence spans 298 residues: uncharacterized protein (298 aa).

10 helical membrane passes run 9 to 28, 38 to 60, 72 to 94, 104 to 121, 128 to 145, 150 to 167, 174 to 196, 211 to 233, 240 to 262, and 272 to 291; these read GYVLGLTAYVIWGLFPLYFK, IIVQRAVWSALFGAVLLLFWKHP, RFVVLAASGLLIASNWMTYVWAV, LGYYINPLINVMLGMLLL, LQWLAVALASLGVAQQVW, LPWVSLVLALTFGFYGLI, AALPGLVVETWLLLPLALVWLLF, PEALWVVAAGPVTLVPLVCFNAA, ATLGFLQYLAPTLVLLQAILLFG, and AFAFIWLALAVYSFDAWRSL. In terms of domain architecture, EamA spans 18-141; the sequence is VIWGLFPLYF…AVALASLGVA (124 aa).

The protein belongs to the EamA transporter family.

The protein resides in the cell membrane. This is an uncharacterized protein from Pseudomonas aeruginosa (strain ATCC 15692 / DSM 22644 / CIP 104116 / JCM 14847 / LMG 12228 / 1C / PRS 101 / PAO1).